Reading from the N-terminus, the 739-residue chain is Phosphoribosylformylglycinamidine synthase subunit PurL (739 aa).

H54 is a catalytic residue. 2 residues coordinate ATP: Y57 and K96. Residue E98 coordinates Mg(2+). Residues 99 to 102 and R121 contribute to the substrate site; that span reads SHNH. The active-site Proton acceptor is the H100. Mg(2+) is bound at residue D122. Q245 serves as a coordination point for substrate. Mg(2+) is bound at residue D273. Position 317–319 (317–319) interacts with substrate; that stretch reads ESQ. Residues D500 and G537 each contribute to the ATP site. N538 serves as a coordination point for Mg(2+). S540 provides a ligand contact to substrate.

This sequence belongs to the FGAMS family. In terms of assembly, monomer. Part of the FGAM synthase complex composed of 1 PurL, 1 PurQ and 2 PurS subunits.

Its subcellular location is the cytoplasm. It catalyses the reaction N(2)-formyl-N(1)-(5-phospho-beta-D-ribosyl)glycinamide + L-glutamine + ATP + H2O = 2-formamido-N(1)-(5-O-phospho-beta-D-ribosyl)acetamidine + L-glutamate + ADP + phosphate + H(+). The protein operates within purine metabolism; IMP biosynthesis via de novo pathway; 5-amino-1-(5-phospho-D-ribosyl)imidazole from N(2)-formyl-N(1)-(5-phospho-D-ribosyl)glycinamide: step 1/2. Functionally, part of the phosphoribosylformylglycinamidine synthase complex involved in the purines biosynthetic pathway. Catalyzes the ATP-dependent conversion of formylglycinamide ribonucleotide (FGAR) and glutamine to yield formylglycinamidine ribonucleotide (FGAM) and glutamate. The FGAM synthase complex is composed of three subunits. PurQ produces an ammonia molecule by converting glutamine to glutamate. PurL transfers the ammonia molecule to FGAR to form FGAM in an ATP-dependent manner. PurS interacts with PurQ and PurL and is thought to assist in the transfer of the ammonia molecule from PurQ to PurL. In Bacillus mycoides (strain KBAB4) (Bacillus weihenstephanensis), this protein is Phosphoribosylformylglycinamidine synthase subunit PurL.